The primary structure comprises 69 residues: ATP synthase subunits region ORF 1 (69 aa).

This chain is ATP synthase subunits region ORF 1, found in Fuscovulum blasticum (Rhodobacter blasticus).